The primary structure comprises 502 residues: 4,4'-diapophytoene desaturase (4,4'-diaponeurosporene-forming) (502 aa).

5–17 serves as a coordination point for FAD; sequence VIGAGVTGLAAAA.

It belongs to the carotenoid/retinoid oxidoreductase family. CrtN subfamily.

The enzyme catalyses 15-cis-4,4'-diapophytoene + 3 FAD + 3 H(+) = all-trans-4,4'-diaponeurosporene + 3 FADH2. It functions in the pathway carotenoid biosynthesis; staphyloxanthin biosynthesis; staphyloxanthin from farnesyl diphosphate: step 2/5. Functionally, involved in the biosynthesis of the yellow-orange carotenoid staphyloxanthin, which plays a role in the virulence via its protective function against oxidative stress. Catalyzes three successive dehydrogenation reactions that lead to the introduction of three double bonds into 4,4'-diapophytoene (dehydrosqualene), with 4,4'-diapophytofluene and 4,4'-diapo-zeta-carotene as intermediates, and 4,4'-diaponeurosporene (the major deep-yellow pigment in staphylococci strains) as the end product. This chain is 4,4'-diapophytoene desaturase (4,4'-diaponeurosporene-forming), found in Staphylococcus aureus (strain COL).